A 425-amino-acid polypeptide reads, in one-letter code: Kynurenine/alpha-aminoadipate aminotransferase, mitochondrial (425 aa).

Residues 1–29 (MNYARFITAASAARNPSPIRTMTDILSRG) constitute a mitochondrion transit peptide. Arginine 20 provides a ligand contact to substrate. Lysine 69 is subject to N6-acetyllysine. Tyrosine 74 and tyrosine 142 together coordinate substrate. Lysine 179 is modified (N6-acetyllysine). The disordered stretch occupies residues 181-208 (EDAKNPQKNTPKFLYTVPNGNNPTGNSL). A compositionally biased stretch (polar residues) spans 198 to 208 (PNGNNPTGNSL). Asparagine 202 serves as a coordination point for substrate. Lysine 263 carries the post-translational modification N6-(pyridoxal phosphate)lysine; alternate. 3 positions are modified to N6-acetyllysine; alternate: lysine 263, lysine 339, and lysine 367. Lysine 263, lysine 339, and lysine 367 each carry N6-succinyllysine; alternate. Arginine 399 contacts substrate. Lysine 422 is subject to N6-acetyllysine.

It belongs to the class-I pyridoxal-phosphate-dependent aminotransferase family. In terms of assembly, homodimer. It depends on pyridoxal 5'-phosphate as a cofactor. As to expression, higher expression in the liver. Also found in heart, brain, kidney, pancreas, prostate, testis and ovary.

The protein resides in the mitochondrion. The enzyme catalyses glycine + 2-oxoglutarate = glyoxylate + L-glutamate. It catalyses the reaction L-kynurenine + 2-oxoglutarate = kynurenate + L-glutamate + H2O. The catalysed reaction is L-kynurenine + glyoxylate = kynurenate + glycine + H2O. It carries out the reaction 3-hydroxy-L-kynurenine + glyoxylate = xanthurenate + glycine + H2O. The enzyme catalyses 2-oxohexanoate + L-kynurenine = L-2-aminohexanoate + kynurenate + H2O. It catalyses the reaction 3-phenylpyruvate + L-kynurenine = kynurenate + L-phenylalanine + H2O. The catalysed reaction is 4-methylsulfanyl-2-oxobutanoate + L-kynurenine = kynurenate + L-methionine + H2O. It carries out the reaction 2-oxo-3-sulfanylpropanoate + L-kynurenine = kynurenate + L-cysteine + H2O. The enzyme catalyses indole-3-pyruvate + L-kynurenine = kynurenate + L-tryptophan + H2O. It catalyses the reaction 2-oxopentanoate + L-kynurenine = L-2-aminopentanoate + kynurenate + H2O. The catalysed reaction is 4-methyl-2-oxopentanoate + L-kynurenine = kynurenate + L-leucine + H2O. It carries out the reaction L-2-aminoadipate + 2-oxoglutarate = 2-oxoadipate + L-glutamate. The enzyme catalyses glyoxylate + L-methionine = 4-methylsulfanyl-2-oxobutanoate + glycine. It catalyses the reaction L-2-aminoadipate + glyoxylate = 2-oxoadipate + glycine. The catalysed reaction is L-tyrosine + glyoxylate = 3-(4-hydroxyphenyl)pyruvate + glycine. It carries out the reaction glyoxylate + L-phenylalanine = 3-phenylpyruvate + glycine. The enzyme catalyses L-tryptophan + glyoxylate = indole-3-pyruvate + glycine. It catalyses the reaction L-leucine + glyoxylate = 4-methyl-2-oxopentanoate + glycine. The catalysed reaction is 2-oxobutanoate + L-kynurenine = (2S)-2-aminobutanoate + kynurenate + H2O. It carries out the reaction 2-oxoadipate + L-kynurenine = L-2-aminoadipate + kynurenate + H2O. The protein operates within amino-acid degradation; L-lysine degradation via saccharopine pathway; glutaryl-CoA from L-lysine: step 4/6. Kynurenine transaminase activity is competitively inhibited by aminoadipate, asparagine, glutamate, histidine, cysteine, lysine, 3-hydroxy-kynurenine and phenylalanine. In terms of biological role, transaminase with broad substrate specificity. Has transaminase activity towards aminoadipate, kynurenine, methionine and glutamate. Shows activity also towards tryptophan, aspartate and hydroxykynurenine. Accepts a variety of oxo-acids as amino-group acceptors, with a preference for 2-oxoglutarate, 2-oxocaproic acid, phenylpyruvate and alpha-oxo-gamma-methiol butyric acid. Can also use glyoxylate as amino-group acceptor (in vitro). This chain is Kynurenine/alpha-aminoadipate aminotransferase, mitochondrial, found in Homo sapiens (Human).